Consider the following 247-residue polypeptide: Ribosomal RNA processing protein 36 homolog (247 aa).

Disordered regions lie at residues 1–29, 62–89, 136–188, and 218–247; these read MDNQLSDSSDDESPTDDCSDEGEVEHLKD, RTQGIPDLETKKKKNKGPQELSSKQRVP, SVEK…RELV, and GKLQKYLTKRRKKTASKDRRHVPERRQVDQ. Acidic residues predominate over residues 8–23; that stretch reads SSDDESPTDDCSDEGE. Basic and acidic residues-rich tracts occupy residues 136 to 153 and 164 to 174; these read SVEKELKKTKNAEKRKNL and ERSRKSAEAKR. The segment covering 218–240 has biased composition (basic residues); sequence GKLQKYLTKRRKKTASKDRRHVP.

Belongs to the RRP36 family.

Its subcellular location is the nucleus. It is found in the nucleolus. Functionally, involved in the early processing steps of the pre-rRNA in the maturation pathway leading to the 18S rRNA. The polypeptide is Ribosomal RNA processing protein 36 homolog (Nematostella vectensis (Starlet sea anemone)).